The chain runs to 304 residues: Quinolinate synthase 1 (304 aa).

Residues H24 and S41 each coordinate iminosuccinate. A [4Fe-4S] cluster-binding site is contributed by C86. Residues 112–114 (YVN) and S129 contribute to the iminosuccinate site. A [4Fe-4S] cluster-binding site is contributed by C171. Iminosuccinate contacts are provided by residues 197–199 (HPE) and T214. C259 contacts [4Fe-4S] cluster.

It belongs to the quinolinate synthase family. Type 2 subfamily. Requires [4Fe-4S] cluster as cofactor.

The protein localises to the cytoplasm. It carries out the reaction iminosuccinate + dihydroxyacetone phosphate = quinolinate + phosphate + 2 H2O + H(+). It functions in the pathway cofactor biosynthesis; NAD(+) biosynthesis; quinolinate from iminoaspartate: step 1/1. Functionally, catalyzes the condensation of iminoaspartate with dihydroxyacetone phosphate to form quinolinate. This Methanosarcina acetivorans (strain ATCC 35395 / DSM 2834 / JCM 12185 / C2A) protein is Quinolinate synthase 1.